The primary structure comprises 208 residues: Large ribosomal subunit protein uL4 (208 aa).

The segment at 49 to 78 (HKAKTRAEVRGGGKKPFRQKGTGNARQGST) is disordered. The segment covering 69-78 (GTGNARQGST) has biased composition (polar residues).

It belongs to the universal ribosomal protein uL4 family. As to quaternary structure, part of the 50S ribosomal subunit.

Its function is as follows. One of the primary rRNA binding proteins, this protein initially binds near the 5'-end of the 23S rRNA. It is important during the early stages of 50S assembly. It makes multiple contacts with different domains of the 23S rRNA in the assembled 50S subunit and ribosome. In terms of biological role, forms part of the polypeptide exit tunnel. The sequence is that of Large ribosomal subunit protein uL4 from Chlorobaculum tepidum (strain ATCC 49652 / DSM 12025 / NBRC 103806 / TLS) (Chlorobium tepidum).